The following is a 276-amino-acid chain: Phosphatidylglycerol--prolipoprotein diacylglyceryl transferase (276 aa).

3 helical membrane-spanning segments follow: residues 17–37, 63–83, and 95–115; these read LAIHWYGLTYLAAFGLFFFLA, ILFLGVMGVVIGGRLGYCLFY, and ILAVWQGGMSFHGGMLGVLAS. Position 146 (R146) interacts with a 1,2-diacyl-sn-glycero-3-phospho-(1'-sn-glycerol). 3 helical membrane passes run 182-202, 209-229, and 235-255; these read SQVYQFLLEGLLLFVLLWLYA, GQVSGAFLVGYGVFRFIAEYF, and FLGILALGLSMGQWLCVPMIV.

It belongs to the Lgt family.

It localises to the cell inner membrane. The enzyme catalyses L-cysteinyl-[prolipoprotein] + a 1,2-diacyl-sn-glycero-3-phospho-(1'-sn-glycerol) = an S-1,2-diacyl-sn-glyceryl-L-cysteinyl-[prolipoprotein] + sn-glycerol 1-phosphate + H(+). The protein operates within protein modification; lipoprotein biosynthesis (diacylglyceryl transfer). Functionally, catalyzes the transfer of the diacylglyceryl group from phosphatidylglycerol to the sulfhydryl group of the N-terminal cysteine of a prolipoprotein, the first step in the formation of mature lipoproteins. This Polaromonas sp. (strain JS666 / ATCC BAA-500) protein is Phosphatidylglycerol--prolipoprotein diacylglyceryl transferase.